A 257-amino-acid polypeptide reads, in one-letter code: Zinc-finger homeodomain protein 6 (257 aa).

The segment at 1 to 35 (MEFRGHDEPVDEMGVAYGRTPPSSSSSPAASASAG) is disordered. A compositionally biased stretch (low complexity) spans 21–35 (PPSSSSSPAASASAG). The ZF-HD dimerization-type; degenerate zinc finger occupies 45-93 (YHECLRNHAAAMGGHVVDGCGEFMPMPGDAADALKCAACGCHRSFHRKD). Pro residues predominate over residues 106–125 (PSPPTPRVPLLMPPPQPQPH). 2 disordered regions span residues 106 to 182 (PSPP…TKFT) and 228 to 257 (NNKSSIGSSSGGGSRRQPQEQQSQQQQQQQ). Residues 141–155 (YHHTPSGSGGTTTES) show a composition bias toward low complexity. A DNA-binding region (homeobox) is located at residues 174–237 (RKRFRTKFTP…NNKSSIGSSS (64 aa)). Low complexity predominate over residues 242–257 (RRQPQEQQSQQQQQQQ).

As to quaternary structure, homo- and heterodimer with other ZFHD proteins.

It localises to the nucleus. Functionally, putative transcription factor. In Oryza sativa subsp. indica (Rice), this protein is Zinc-finger homeodomain protein 6 (ZHD6).